Here is a 269-residue protein sequence, read N- to C-terminus: Undecaprenyl-diphosphatase (269 aa).

The next 8 membrane-spanning stretches (helical) occupy residues 4-24, 50-70, 86-106, 113-133, 146-166, 186-206, 220-240, and 246-266; these read IELWTAVLAGVVQGITEWLPI, LWLHAGTLLAVLLRFGVPYWL, LFAIVATVCTAVVGLPVYKVL, ATGDAVQMAIGGALIVTGLLL, VNVVDAVIVGLGQGFSVIPGI, AVWLSFYLAGPAMLGATALEL, WMVTAIGVSFVVSLICMEVLL, and LDFSKVCLLLGGIALLVPLAA.

Belongs to the UppP family.

The protein resides in the cell membrane. It carries out the reaction di-trans,octa-cis-undecaprenyl diphosphate + H2O = di-trans,octa-cis-undecaprenyl phosphate + phosphate + H(+). Catalyzes the dephosphorylation of undecaprenyl diphosphate (UPP). This is Undecaprenyl-diphosphatase from Methanopyrus kandleri (strain AV19 / DSM 6324 / JCM 9639 / NBRC 100938).